We begin with the raw amino-acid sequence, 56 residues long: Bowman-Birk type proteinase inhibitor I-2B (56 aa).

Disulfide bonds link C10-C25, C15-C23, C32-C39, and C36-C51.

Belongs to the Bowman-Birk serine protease inhibitor family.

This chain is Bowman-Birk type proteinase inhibitor I-2B, found in Triticum aestivum (Wheat).